A 404-amino-acid chain; its full sequence is Argininosuccinate synthase (404 aa).

ATP is bound by residues 10 to 18 (AYSGGVDTS) and alanine 38. L-citrulline is bound at residue tyrosine 89. ATP is bound at residue glycine 119. Positions 121, 125, and 126 each coordinate L-aspartate. Asparagine 125 provides a ligand contact to L-citrulline. Residues arginine 129, serine 177, serine 186, glutamate 262, and tyrosine 274 each coordinate L-citrulline.

This sequence belongs to the argininosuccinate synthase family. Type 1 subfamily. Homotetramer.

The protein resides in the cytoplasm. The enzyme catalyses L-citrulline + L-aspartate + ATP = 2-(N(omega)-L-arginino)succinate + AMP + diphosphate + H(+). The protein operates within amino-acid biosynthesis; L-arginine biosynthesis; L-arginine from L-ornithine and carbamoyl phosphate: step 2/3. The protein is Argininosuccinate synthase of Prochlorococcus marinus (strain MIT 9301).